Reading from the N-terminus, the 120-residue chain is CLAVATA3/ESR (CLE)-related protein 9 (120 aa).

A signal peptide spans methionine 1–alanine 26. Residue asparagine 35 is glycosylated (N-linked (GlcNAc...) asparagine). A disordered region spans residues arginine 85–asparagine 120. Residues isoleucine 100–leucine 110 show a composition bias toward basic and acidic residues. Proline 112 and proline 115 each carry hydroxyproline. An O-linked (Ara...) hydroxyproline glycan is attached at proline 115.

The protein belongs to the CLV3/ESR signal peptide family. In terms of processing, the O-glycosylation (arabinosylation) of the hydroxyproline Pro-115 enhances binding affinity of the CLE9p peptide for its receptor. Mostly expressed in leaves, flowers, stems and apex, and, to a lower extent, in seedlings, roots, siliques and pollen.

The protein resides in the secreted. The protein localises to the extracellular space. Functionally, extracellular signal peptide that regulates cell fate. Represses root apical meristem maintenance. Regulates the transition of protophloem cells from proliferation to differentiation, thus impinging on postembryonic growth capacity of the root meristem; this signaling pathway requires CRN and CLV2. This chain is CLAVATA3/ESR (CLE)-related protein 9, found in Arabidopsis thaliana (Mouse-ear cress).